Here is a 129-residue protein sequence, read N- to C-terminus: Protein RALF-like 34 (129 aa).

A signal peptide spans 1 to 23 (MAASSLNLLLILSLLTFISLQRS). The propeptide at 24–76 (ESLSDNPSLTLLPDGFDWPISHSDEFDIIDGEESFEVTEEDDGVTDRRSLYWR) is removed in mature form. Disulfide bonds link Cys-94-Cys-107 and Cys-121-Cys-127.

The protein belongs to the plant rapid alkalinization factor (RALF) family. Proteolytically cleaved, probably by S1P, a subtilisin-like serine protease (subtilase). Expressed in roots, stems and leaves.

It localises to the secreted. In terms of biological role, cell signaling peptide that may regulate plant stress, growth, and development. Mediates a rapid alkalinization of extracellular space by mediating a transient increase in the cytoplasmic Ca(2+) concentration leading to a calcium-dependent signaling events through a cell surface receptor and a concomitant activation of some intracellular mitogen-activated protein kinases. This chain is Protein RALF-like 34 (RALFL34), found in Arabidopsis thaliana (Mouse-ear cress).